A 366-amino-acid polypeptide reads, in one-letter code: NADH-quinone oxidoreductase subunit D (366 aa).

This sequence belongs to the complex I 49 kDa subunit family. NDH-1 is composed of 14 different subunits. Subunits NuoB, C, D, E, F, and G constitute the peripheral sector of the complex.

The protein localises to the cell membrane. The enzyme catalyses a quinone + NADH + 5 H(+)(in) = a quinol + NAD(+) + 4 H(+)(out). In terms of biological role, NDH-1 shuttles electrons from NADH, via FMN and iron-sulfur (Fe-S) centers, to quinones in the respiratory chain. The immediate electron acceptor for the enzyme in this species is believed to be a menaquinone. Couples the redox reaction to proton translocation (for every two electrons transferred, four hydrogen ions are translocated across the cytoplasmic membrane), and thus conserves the redox energy in a proton gradient. This is NADH-quinone oxidoreductase subunit D from Bacillus anthracis.